Reading from the N-terminus, the 826-residue chain is Ubiquitin carboxyl-terminal hydrolase 16 (826 aa).

The UBP-type zinc finger occupies 22 to 142; that stretch reads PMCRHIRKGL…QVVDYVRKQA (121 aa). Positions 24, 26, 48, 51, 74, 77, 82, 90, 94, 103, 116, and 119 each coordinate Zn(2+). A Glycyl lysine isopeptide (Lys-Gly) (interchain with G-Cter in SUMO2) cross-link involves residue K140. Positions 146–190 are disordered; that stretch reads TPKPAEKDNGNIELENKKLEKESKNEQEREKKENMAKENPPMNSP. A compositionally biased stretch (basic and acidic residues) spans 149 to 181; that stretch reads PAEKDNGNIELENKKLEKESKNEQEREKKENMA. Position 189 is a phosphoserine (S189). In terms of domain architecture, USP spans 196–825; it reads KGLSNLGNTC…QAYLLFYERI (630 aa). Residue C205 is the Nucleophile of the active site. The segment covering 394 to 408 has biased composition (basic and acidic residues); it reads SGKKSVNDKNLKKTM. The tract at residues 394–460 is disordered; it reads SGKKSVNDKN…AKNQRRQQKI (67 aa). Positions 409-420 are enriched in acidic residues; sequence EDEDQDSEEEKD. S415 is subject to Phosphoserine. The span at 421–430 shows a compositional bias: basic and acidic residues; it reads NDSYIKERSD. Residues 438–458 are compositionally biased toward basic residues; that stretch reads HLQKKAKKQAKKQAKNQRRQQ. S552 bears the Phosphoserine mark. A Phosphothreonine modification is found at T557. H761 functions as the Proton acceptor in the catalytic mechanism.

Belongs to the peptidase C19 family. USP16 subfamily. Homotetramer. Associates with late pre-40S ribosomes. Interacts with CEP78; promoting deubiquitination of tektins. Phosphorylated at the onset of mitosis and dephosphorylated during the metaphase/anaphase transition. Phosphorylation by AURKB enhances the deubiquitinase activity.

Its subcellular location is the nucleus. It carries out the reaction Thiol-dependent hydrolysis of ester, thioester, amide, peptide and isopeptide bonds formed by the C-terminal Gly of ubiquitin (a 76-residue protein attached to proteins as an intracellular targeting signal).. Specifically deubiquitinates 'Lys-120' of histone H2A (H2AK119Ub), a specific tag for epigenetic transcriptional repression, thereby acting as a coactivator. Deubiquitination of histone H2A is a prerequisite for subsequent phosphorylation at 'Ser-11' of histone H3 (H3S10ph), and is required for chromosome segregation when cells enter into mitosis. In resting B- and T-lymphocytes, phosphorylation by AURKB leads to enhance its activity, thereby maintaining transcription in resting lymphocytes. Regulates Hox gene expression via histone H2A deubiquitination. Prefers nucleosomal substrates. Does not deubiquitinate histone H2B. Also deubiquitinates non-histone proteins, such as ribosomal protein RPS27A: deubiquitination of monoubiquitinated RPS27A promotes maturation of the 40S ribosomal subunit. Also mediates deubiquitination of tektin proteins (TEKT1, TEKT2, TEK3, TEKT4 and TEKT5), promoting their stability. The polypeptide is Ubiquitin carboxyl-terminal hydrolase 16 (Macaca fascicularis (Crab-eating macaque)).